The primary structure comprises 361 residues: Phospho-N-acetylmuramoyl-pentapeptide-transferase (361 aa).

The next 10 membrane-spanning stretches (helical) occupy residues 28–48, 74–94, 99–119, 133–153, 168–188, 203–223, 236–256, 263–283, 288–308, and 338–358; these read LAII…IKFL, TMGG…LADL, IWIT…DDYA, SKLL…EYTD, LSLD…VGSS, VPIA…GNLI, TGEL…FLWF, VFMG…ISVI, VVLS…ILQV, and KVVI…LSSL.

This sequence belongs to the glycosyltransferase 4 family. MraY subfamily. Mg(2+) is required as a cofactor.

It localises to the cell inner membrane. The enzyme catalyses UDP-N-acetyl-alpha-D-muramoyl-L-alanyl-gamma-D-glutamyl-meso-2,6-diaminopimeloyl-D-alanyl-D-alanine + di-trans,octa-cis-undecaprenyl phosphate = di-trans,octa-cis-undecaprenyl diphospho-N-acetyl-alpha-D-muramoyl-L-alanyl-D-glutamyl-meso-2,6-diaminopimeloyl-D-alanyl-D-alanine + UMP. It participates in cell wall biogenesis; peptidoglycan biosynthesis. Functionally, catalyzes the initial step of the lipid cycle reactions in the biosynthesis of the cell wall peptidoglycan: transfers peptidoglycan precursor phospho-MurNAc-pentapeptide from UDP-MurNAc-pentapeptide onto the lipid carrier undecaprenyl phosphate, yielding undecaprenyl-pyrophosphoryl-MurNAc-pentapeptide, known as lipid I. This is Phospho-N-acetylmuramoyl-pentapeptide-transferase from Rickettsia canadensis (strain McKiel).